Reading from the N-terminus, the 143-residue chain is Transcription antitermination protein NusB (143 aa).

Belongs to the NusB family.

Involved in transcription antitermination. Required for transcription of ribosomal RNA (rRNA) genes. Binds specifically to the boxA antiterminator sequence of the ribosomal RNA (rrn) operons. This Desulforamulus reducens (strain ATCC BAA-1160 / DSM 100696 / MI-1) (Desulfotomaculum reducens) protein is Transcription antitermination protein NusB.